We begin with the raw amino-acid sequence, 86 residues long: Probable weak neurotoxin NNAM2 (86 aa).

A signal peptide spans 1–21 (MKTLLLTLVVVTIVCLDLGYT). Cystine bridges form between C24–C45, C27–C32, C38–C63, C67–C78, and C79–C84.

The protein belongs to the three-finger toxin family. Ancestral subfamily. Orphan group II sub-subfamily. Expressed by the venom gland.

The protein localises to the secreted. In terms of biological role, binds with low affinity to muscular (alpha-1-beta-1-delta-epsilon/CHRNA1-CHRNB1-CHRND-CHRNE) and very low affinity to neuronal (alpha-7/CHRNA7) nicotinic acetylcholine receptor (nAChR). In Naja atra (Chinese cobra), this protein is Probable weak neurotoxin NNAM2.